Consider the following 175-residue polypeptide: Transcription factor E (175 aa).

Residues 3-88 (DNPLIQQVLF…TWKPSLEKLP (86 aa)) enclose the HTH TFE/IIEalpha-type domain.

This sequence belongs to the TFE family. In terms of assembly, monomer. Interaction with RNA polymerase subunits RpoF and RpoE is necessary for Tfe stimulatory transcription activity. Able to interact with Tbp and RNA polymerase in the absence of DNA promoter. Interacts both with the preinitiation and elongation complexes.

Transcription factor that plays a role in the activation of archaeal genes transcribed by RNA polymerase. Facilitates transcription initiation by enhancing TATA-box recognition by TATA-box-binding protein (Tbp), and transcription factor B (Tfb) and RNA polymerase recruitment. Not absolutely required for transcription in vitro, but particularly important in cases where Tbp or Tfb function is not optimal. It dynamically alters the nucleic acid-binding properties of RNA polymerases by stabilizing the initiation complex and destabilizing elongation complexes. Seems to translocate with the RNA polymerase following initiation and acts by binding to the non template strand of the transcription bubble in elongation complexes. This chain is Transcription factor E, found in Methanococcus vannielii (strain ATCC 35089 / DSM 1224 / JCM 13029 / OCM 148 / SB).